The chain runs to 388 residues: Palmitoyltransferase ZDHHC18-B (388 aa).

Positions 1 to 33 (MKNREYQQIDPQALATPTPTPPPRSLPEHKPRR) are disordered. Topologically, residues 1–58 (MKNREYQQIDPQALATPTPTPPPRSLPEHKPRRARRKWEVFPGKNRFYCDGRIIVARQ) are cytoplasmic. Residues 59 to 79 (SGVLPLTLGLILLTSGLFFIF) form a helical membrane-spanning segment. At 80–87 (DCPFLVKH) the chain is on the lumenal side. A helical membrane pass occupies residues 88-108 (LTSCIPAIGGVLFVFVIISLL). The Cytoplasmic portion of the chain corresponds to 109–205 (QTSFTDPGIL…GNCVGKRNYR (97 aa)). The region spanning 162 to 212 (KYCFTCKIFRPPRTSHCSLCDNCVERFDHHCPWVGNCVGKRNYRFFYTFIV) is the DHHC domain. The active-site S-palmitoyl cysteine intermediate is cysteine 192. The chain crosses the membrane as a helical span at residues 206 to 226 (FFYTFIVSLSFLTAFIFGCVT). Topologically, residues 227–253 (THLALRSQGGNGLVNALQSSPASALEL) are lumenal. Residues 254–274 (VVCFFSVWSILGLSGFHTYLV) form a helical membrane-spanning segment. Over 275 to 388 (AANLTTNEDI…AISMQNHSTA (114 aa)) the chain is Cytoplasmic.

The protein belongs to the DHHC palmitoyltransferase family. ERF2/ZDHHC9 subfamily.

The protein resides in the golgi apparatus membrane. The catalysed reaction is L-cysteinyl-[protein] + hexadecanoyl-CoA = S-hexadecanoyl-L-cysteinyl-[protein] + CoA. Functionally, palmitoyltransferase that catalyzes the addition of palmitate onto various protein substrates, such as CGAS, HRAS and LCK. The chain is Palmitoyltransferase ZDHHC18-B from Danio rerio (Zebrafish).